Here is a 510-residue protein sequence, read N- to C-terminus: Kynurenine 3-monooxygenase (510 aa).

The protein belongs to the aromatic-ring hydroxylase family. KMO subfamily. FAD serves as cofactor.

The protein resides in the mitochondrion outer membrane. The catalysed reaction is L-kynurenine + NADPH + O2 + H(+) = 3-hydroxy-L-kynurenine + NADP(+) + H2O. It participates in cofactor biosynthesis; NAD(+) biosynthesis; quinolinate from L-kynurenine: step 1/3. Catalyzes the hydroxylation of L-kynurenine (L-Kyn) to form 3-hydroxy-L-kynurenine (L-3OHKyn). Required for synthesis of quinolinic acid. The polypeptide is Kynurenine 3-monooxygenase (bna4) (Aspergillus oryzae (strain ATCC 42149 / RIB 40) (Yellow koji mold)).